A 264-amino-acid chain; its full sequence is S-adenosylmethionine decarboxylase proenzyme (264 aa).

The Schiff-base intermediate with substrate; via pyruvic acid role is filled by Ser113. Ser113 is modified (pyruvic acid (Ser); by autocatalysis). His118 acts as the Proton acceptor; for processing activity in catalysis. The Proton donor; for catalytic activity role is filled by Cys141.

This sequence belongs to the prokaryotic AdoMetDC family. Type 2 subfamily. As to quaternary structure, heterooctamer of four alpha and four beta chains arranged as a tetramer of alpha/beta heterodimers. Requires pyruvate as cofactor. In terms of processing, is synthesized initially as an inactive proenzyme. Formation of the active enzyme involves a self-maturation process in which the active site pyruvoyl group is generated from an internal serine residue via an autocatalytic post-translational modification. Two non-identical subunits are generated from the proenzyme in this reaction, and the pyruvate is formed at the N-terminus of the alpha chain, which is derived from the carboxyl end of the proenzyme. The post-translation cleavage follows an unusual pathway, termed non-hydrolytic serinolysis, in which the side chain hydroxyl group of the serine supplies its oxygen atom to form the C-terminus of the beta chain, while the remainder of the serine residue undergoes an oxidative deamination to produce ammonia and the pyruvoyl group blocking the N-terminus of the alpha chain.

It catalyses the reaction S-adenosyl-L-methionine + H(+) = S-adenosyl 3-(methylsulfanyl)propylamine + CO2. Its pathway is amine and polyamine biosynthesis; S-adenosylmethioninamine biosynthesis; S-adenosylmethioninamine from S-adenosyl-L-methionine: step 1/1. Functionally, catalyzes the decarboxylation of S-adenosylmethionine to S-adenosylmethioninamine (dcAdoMet), the propylamine donor required for the synthesis of the polyamines spermine and spermidine from the diamine putrescine. This chain is S-adenosylmethionine decarboxylase proenzyme, found in Xanthomonas oryzae pv. oryzae (strain MAFF 311018).